The chain runs to 513 residues: Sterol 14-alpha demethylase (513 aa).

The helical transmembrane segment at 10–30 threads the bilayer; the sequence is FTLVSAYAAAGLLAIIVLNLL. Asn37 and Asn406 each carry an N-linked (GlcNAc...) asparagine glycan. Cys453 lines the heme pocket.

The protein belongs to the cytochrome P450 family. It depends on heme as a cofactor.

The protein localises to the endoplasmic reticulum membrane. The enzyme catalyses a 14alpha-methyl steroid + 3 reduced [NADPH--hemoprotein reductase] + 3 O2 = a Delta(14) steroid + formate + 3 oxidized [NADPH--hemoprotein reductase] + 4 H2O + 4 H(+). The catalysed reaction is a 14alpha-methyl steroid + reduced [NADPH--hemoprotein reductase] + O2 = a 14alpha-hydroxymethyl steroid + oxidized [NADPH--hemoprotein reductase] + H2O + H(+). It carries out the reaction a 14alpha-hydroxymethyl steroid + reduced [NADPH--hemoprotein reductase] + O2 = a 14alpha-formyl steroid + oxidized [NADPH--hemoprotein reductase] + 2 H2O + H(+). It catalyses the reaction a 14alpha-formyl steroid + reduced [NADPH--hemoprotein reductase] + O2 = a Delta(14) steroid + formate + oxidized [NADPH--hemoprotein reductase] + H2O + 2 H(+). The enzyme catalyses lanosterol + 3 reduced [NADPH--hemoprotein reductase] + 3 O2 = 4,4-dimethyl-5alpha-cholesta-8,14,24-trien-3beta-ol + formate + 3 oxidized [NADPH--hemoprotein reductase] + 4 H2O + 4 H(+). The catalysed reaction is lanosterol + reduced [NADPH--hemoprotein reductase] + O2 = 32-hydroxylanosterol + oxidized [NADPH--hemoprotein reductase] + H2O + H(+). It carries out the reaction 32-hydroxylanosterol + reduced [NADPH--hemoprotein reductase] + O2 = 32-oxolanosterol + oxidized [NADPH--hemoprotein reductase] + 2 H2O + H(+). It catalyses the reaction 32-oxolanosterol + reduced [NADPH--hemoprotein reductase] + O2 = 4,4-dimethyl-5alpha-cholesta-8,14,24-trien-3beta-ol + formate + oxidized [NADPH--hemoprotein reductase] + H2O + 2 H(+). The enzyme catalyses eburicol + 3 reduced [NADPH--hemoprotein reductase] + 3 O2 = 14-demethyleburicol + formate + 3 oxidized [NADPH--hemoprotein reductase] + 4 H2O + 4 H(+). The catalysed reaction is eburicol + reduced [NADPH--hemoprotein reductase] + O2 = 32-hydroxyeburicol + oxidized [NADPH--hemoprotein reductase] + H2O + H(+). It carries out the reaction 32-hydroxyeburicol + reduced [NADPH--hemoprotein reductase] + O2 = 32-oxoeburicol + oxidized [NADPH--hemoprotein reductase] + 2 H2O + H(+). It catalyses the reaction 32-oxoeburicol + reduced [NADPH--hemoprotein reductase] + O2 = 14-demethyleburicol + formate + oxidized [NADPH--hemoprotein reductase] + H2O + 2 H(+). Its pathway is steroid biosynthesis; sterol biosynthesis. In terms of biological role, sterol 14alpha-demethylase, encoded by cyp51A, cyp51B and cyp51C, that plays a critical role in the third module of ergosterol biosynthesis pathway, being ergosterol the major sterol component in fungal membranes that participates in a variety of functions. The third module or late pathway involves the ergosterol synthesis itself through consecutive reactions that mainly occur in the endoplasmic reticulum (ER) membrane. In filamentous fungi, during the initial step of this module, lanosterol (lanosta-8,24-dien-3beta-ol) can be metabolized to eburicol. Sterol 14alpha-demethylase catalyzes the three-step oxidative removal of the 14alpha-methyl group (C-32) of both these sterols in the form of formate, and converts eburicol and lanosterol to 14-demethyleburicol (4,4,24-trimethylergosta-8,14,24(28)-trienol) and 4,4-dimethyl-5alpha-cholesta-8,14,24-trien-3beta-ol, respectively, which are further metabolized by other enzymes in the pathway to ergosterol. Can also use substrates not intrinsic to fungi, such as 24,25-dihydrolanosterol (DHL), producing 4,4'-dimethyl-8,14-cholestadien-3-beta-ol, but at lower rates than the endogenous substrates. Functionally, as a target of azole drugs, plays a crucial role in azole susceptibility. The protein is Sterol 14-alpha demethylase of Aspergillus flavus (strain ATCC 200026 / FGSC A1120 / IAM 13836 / NRRL 3357 / JCM 12722 / SRRC 167).